We begin with the raw amino-acid sequence, 602 residues long: Elongation factor 4 (602 aa).

One can recognise a tr-type G domain in the interval 7–189 (KYIRNFSIVA…AIVSKVPAPY (183 aa)). Residues 19–24 (DHGKST) and 136–139 (NKID) contribute to the GTP site.

It belongs to the TRAFAC class translation factor GTPase superfamily. Classic translation factor GTPase family. LepA subfamily.

It is found in the cell membrane. It catalyses the reaction GTP + H2O = GDP + phosphate + H(+). Functionally, required for accurate and efficient protein synthesis under certain stress conditions. May act as a fidelity factor of the translation reaction, by catalyzing a one-codon backward translocation of tRNAs on improperly translocated ribosomes. Back-translocation proceeds from a post-translocation (POST) complex to a pre-translocation (PRE) complex, thus giving elongation factor G a second chance to translocate the tRNAs correctly. Binds to ribosomes in a GTP-dependent manner. This chain is Elongation factor 4, found in Clostridium botulinum (strain Loch Maree / Type A3).